Reading from the N-terminus, the 158-residue chain is RNA pyrophosphohydrolase (158 aa).

Residues 6 to 150 (GYRLNVGIVL…KRDVYRKVMQ (145 aa)) enclose the Nudix hydrolase domain. Positions 39–60 (GGINIGETPEQAMYRELFEEIG) match the Nudix box motif.

Belongs to the Nudix hydrolase family. RppH subfamily. A divalent metal cation serves as cofactor.

In terms of biological role, accelerates the degradation of transcripts by removing pyrophosphate from the 5'-end of triphosphorylated RNA, leading to a more labile monophosphorylated state that can stimulate subsequent ribonuclease cleavage. This chain is RNA pyrophosphohydrolase, found in Blochmanniella pennsylvanica (strain BPEN).